Reading from the N-terminus, the 185-residue chain is Threonylcarbamoyl-AMP synthase (185 aa).

Residues 7–185 form the YrdC-like domain; it reads AAQRRAARAH…IDFASGRVLR (179 aa).

Belongs to the SUA5 family. TsaC subfamily.

It is found in the cytoplasm. The catalysed reaction is L-threonine + hydrogencarbonate + ATP = L-threonylcarbamoyladenylate + diphosphate + H2O. In terms of biological role, required for the formation of a threonylcarbamoyl group on adenosine at position 37 (t(6)A37) in tRNAs that read codons beginning with adenine. Catalyzes the conversion of L-threonine, HCO(3)(-)/CO(2) and ATP to give threonylcarbamoyl-AMP (TC-AMP) as the acyladenylate intermediate, with the release of diphosphate. In Laribacter hongkongensis (strain HLHK9), this protein is Threonylcarbamoyl-AMP synthase.